The chain runs to 452 residues: FAD-linked oxidoreductase DDB_G0289697 (452 aa).

One can recognise an FAD-binding PCMH-type domain in the interval 44-212 (VVNTPLLIVY…TDFTFKLHPV (169 aa)). His-81 bears the Pros-8alpha-FAD histidine mark.

Belongs to the oxygen-dependent FAD-linked oxidoreductase family. Requires FAD as cofactor.

The chain is FAD-linked oxidoreductase DDB_G0289697 from Dictyostelium discoideum (Social amoeba).